Consider the following 198-residue polypeptide: Na(+)-translocating NADH-quinone reductase subunit E (198 aa).

The next 6 membrane-spanning stretches (helical) occupy residues 11–31 (SIFI…FLAV), 39–59 (FGLG…NNLV), 77–97 (FLNF…LEMV), 110–130 (GIFL…SFMV), 140–160 (IVYG…LAGI), and 176–196 (LGIT…FSGV).

This sequence belongs to the NqrDE/RnfAE family. As to quaternary structure, composed of six subunits; NqrA, NqrB, NqrC, NqrD, NqrE and NqrF.

The protein resides in the cell inner membrane. The enzyme catalyses a ubiquinone + n Na(+)(in) + NADH + H(+) = a ubiquinol + n Na(+)(out) + NAD(+). Its function is as follows. NQR complex catalyzes the reduction of ubiquinone-1 to ubiquinol by two successive reactions, coupled with the transport of Na(+) ions from the cytoplasm to the periplasm. NqrA to NqrE are probably involved in the second step, the conversion of ubisemiquinone to ubiquinol. This is Na(+)-translocating NADH-quinone reductase subunit E from Aliivibrio salmonicida (strain LFI1238) (Vibrio salmonicida (strain LFI1238)).